The chain runs to 253 residues: Phycoerythrobilin:ferredoxin oxidoreductase (253 aa).

Belongs to the HY2 family.

It catalyses the reaction (3Z)-phycoerythrobilin + oxidized 2[4Fe-4S]-[ferredoxin] = 15,16-dihydrobiliverdin + reduced 2[4Fe-4S]-[ferredoxin] + 2 H(+). Functionally, catalyzes the two-electron reduction of the C2 and C3(1) diene system of 15,16-dihydrobiliverdin. This is Phycoerythrobilin:ferredoxin oxidoreductase from Prochlorococcus marinus (strain MIT 9312).